Consider the following 144-residue polypeptide: MNFKYIVAVSFLIASTYARSVKNDEQSLSQRDVLEEESLREIRGIGGALLSAGKSALKGLAKGLAEHFANGKRTAEEHEVMKRLEAVMRDLDSLDYPEEASEMETRSFNQEEIANLFTKKEKRILGPVLDLVGRALRGLLKKIG.

A signal peptide spans methionine 1–alanine 18. A propeptide spanning residues arginine 19 to arginine 43 is cleaved from the precursor. Asparagine 70 is subject to Asparagine amide. Positions threonine 74–arginine 123 are excised as a propeptide. Isoleucine 143 carries the isoleucine amide modification.

It belongs to the bombinin family. As to expression, expressed by the skin glands.

The protein resides in the secreted. Antimicrobial peptide with activity against Gram-positive and -negative bacteria and fungi. Shows activity against P.acnes (MIC=5 uM), E.coli (MIC=5-6.3 uM), S.aureus (MIC=5-6.3 uM), M.luteus, S.cerevisiae and C.albicans (MIC=10-12.5 uM). Also reduces the production of interleukin (IL)-8 and granulocyte-macrophage colony stimulating factor (CSF2) in normal human epidermal keratinocytes (NHEKs). Shows anticancer activity against three human hepatoma cell lines. In vivo, using the rat ear edema model, suppress P.acnes-induced skin inflammation, significantly reducing the ear thickness. Shows weak hemolytic activity against human erythrocytes. In terms of biological role, shows weak antimicrobial activity but high hemolytic activity. In Bombina orientalis (Oriental fire-bellied toad), this protein is Bombinins BLP-7/GH-2.